Reading from the N-terminus, the 425-residue chain is Glutamyl-tRNA reductase (425 aa).

Substrate-binding positions include 49 to 52 (TCNR), S107, 112 to 114 (EPQ), and Q118. C50 (nucleophile) is an active-site residue. An NADP(+)-binding site is contributed by 187–192 (GAGETI).

The protein belongs to the glutamyl-tRNA reductase family. As to quaternary structure, homodimer.

It catalyses the reaction (S)-4-amino-5-oxopentanoate + tRNA(Glu) + NADP(+) = L-glutamyl-tRNA(Glu) + NADPH + H(+). It participates in porphyrin-containing compound metabolism; protoporphyrin-IX biosynthesis; 5-aminolevulinate from L-glutamyl-tRNA(Glu): step 1/2. Functionally, catalyzes the NADPH-dependent reduction of glutamyl-tRNA(Glu) to glutamate 1-semialdehyde (GSA). The sequence is that of Glutamyl-tRNA reductase from Pseudomonas putida (strain ATCC 47054 / DSM 6125 / CFBP 8728 / NCIMB 11950 / KT2440).